A 437-amino-acid polypeptide reads, in one-letter code: UDP-N-acetylmuramate--L-alanine ligase (437 aa).

108 to 114 (GAHGKTS) provides a ligand contact to ATP.

It belongs to the MurCDEF family.

It localises to the cytoplasm. It carries out the reaction UDP-N-acetyl-alpha-D-muramate + L-alanine + ATP = UDP-N-acetyl-alpha-D-muramoyl-L-alanine + ADP + phosphate + H(+). Its pathway is cell wall biogenesis; peptidoglycan biosynthesis. In terms of biological role, cell wall formation. In Staphylococcus haemolyticus (strain JCSC1435), this protein is UDP-N-acetylmuramate--L-alanine ligase.